Consider the following 85-residue polypeptide: UPF0386 protein HNE_3437 (85 aa).

Belongs to the UPF0386 family.

This Hyphomonas neptunium (strain ATCC 15444) protein is UPF0386 protein HNE_3437.